We begin with the raw amino-acid sequence, 215 residues long: Glutaredoxin 2 (215 aa).

The region spanning 1-77 (MKLYIYDHCP…YVDKLDGKPL (77 aa)) is the GST N-terminal domain. C9 and C12 form a disulfide bridge.

The protein belongs to the glutaredoxin family.

Functionally, involved in reducing some disulfides in a coupled system with glutathione reductase. Does not act as hydrogen donor for ribonucleotide reductase. This Escherichia coli O157:H7 protein is Glutaredoxin 2 (grxB).